The sequence spans 254 residues: RxLR effector protein CRE5 (254 aa).

The first 19 residues, 1–19, serve as a signal peptide directing secretion; sequence MQTIQLIIFVAFVLSRAAA. An N-linked (GlcNAc...) asparagine glycan is attached at asparagine 49. A RxLR-dEER motif is present at residues 53 to 63; that stretch reads RSLRQHEGEDR. Positions 191–254 constitute a Nudix hydrolase domain; the sequence is SRWLSAGVVT…MEEGGVCRAL (64 aa). A Nudix box motif is present at residues 228-249; the sequence is GGWDRGEKIKKAALREVMEEGG.

It in the N-terminal section; belongs to the RxLR effector family. The protein in the C-terminal section; belongs to the Nudix hydrolase family.

The protein localises to the secreted. Its subcellular location is the host cytoplasm. It localises to the host nucleus. The protein resides in the host nucleolus. Its function is as follows. Effector that is involved in host plant infection. Contributes to virulence during the early infection stage, by inhibiting plant defense responses induced by both PAMP-triggered immunity (PTI) and effector-triggered immunity (ETI). This Phytophthora infestans (strain T30-4) (Potato late blight agent) protein is RxLR effector protein CRE5.